The sequence spans 447 residues: Alpha-1,3-mannosyl-glycoprotein 2-beta-N-acetylglucosaminyltransferase (447 aa).

Over 1–6 the chain is Cytoplasmic; that stretch reads MLKKQS. A helical; Signal-anchor for type II membrane protein transmembrane segment spans residues 7-29; the sequence is AGLVLWGAIIFVGWNALLLLFFW. At 30-447 the chain is on the lumenal side; the sequence is TRPAPGRLPS…TWNGYDPSWN (418 aa). Cys115 and Cys145 are oxidised to a cystine. Substrate-binding residues include Arg117, Asp144, His190, and Asp212. Asp213 is a binding site for Mn(2+). The cysteines at positions 239 and 305 are disulfide-linked. Catalysis depends on Asp291, which acts as the Proton acceptor. Ser322 contributes to the substrate binding site.

The protein belongs to the glycosyltransferase 13 family. As to quaternary structure, interacts with MGAT4D. Interacts with BRI3. Requires Mn(2+) as cofactor. In terms of tissue distribution, appears to be present in all tissues.

The protein resides in the golgi apparatus membrane. Its subcellular location is the cytoplasm. It is found in the perinuclear region. It carries out the reaction N(4)-(alpha-D-Man-(1-&gt;3)-[alpha-D-Man-(1-&gt;3)-[alpha-D-Man-(1-&gt;6)]-alpha-D-Man-(1-&gt;6)]-beta-D-Man-(1-&gt;4)-beta-D-GlcNAc-(1-&gt;4)-beta-D-GlcNAc)-L-asparaginyl-[protein] (N-glucan mannose isomer 5A1,2) + UDP-N-acetyl-alpha-D-glucosamine = N(4)-{beta-D-GlcNAc-(1-&gt;2)-alpha-D-Man-(1-&gt;3)-[alpha-D-Man-(1-&gt;3)-[alpha-D-Man-(1-&gt;6)]-alpha-D-Man-(1-&gt;6)]-beta-D-Man-(1-&gt;4)-beta-D-GlcNAc-(1-&gt;4)-beta-D-GlcNAc}-L-asparaginyl-[protein] + UDP + H(+). It functions in the pathway protein modification; protein glycosylation. In terms of biological role, initiates complex N-linked carbohydrate formation. Essential for the conversion of high-mannose to hybrid and complex N-glycans. The sequence is that of Alpha-1,3-mannosyl-glycoprotein 2-beta-N-acetylglucosaminyltransferase (Mgat1) from Rattus norvegicus (Rat).